The chain runs to 311 residues: Large ribosomal subunit protein uL22 (311 aa).

Belongs to the universal ribosomal protein uL22 family. Part of the 50S ribosomal subunit.

This protein binds specifically to 23S rRNA; its binding is stimulated by other ribosomal proteins, e.g. L4, L17, and L20. It is important during the early stages of 50S assembly. It makes multiple contacts with different domains of the 23S rRNA in the assembled 50S subunit and ribosome. Its function is as follows. The globular domain of the protein is located near the polypeptide exit tunnel on the outside of the subunit, while an extended beta-hairpin is found that lines the wall of the exit tunnel in the center of the 70S ribosome. This Ureaplasma parvum serovar 3 (strain ATCC 27815 / 27 / NCTC 11736) protein is Large ribosomal subunit protein uL22 (rplV).